A 254-amino-acid chain; its full sequence is NAD-dependent protein deacylase (254 aa).

In terms of domain architecture, Deacetylase sirtuin-type spans 1–250 (MERLEEARKR…LPPSPEDQAE (250 aa)). 22–41 (GAGISKPSGIPTFRDAEGLW) provides a ligand contact to NAD(+). Substrate-binding residues include tyrosine 66 and arginine 69. 104-107 (QNVD) provides a ligand contact to NAD(+). The active-site Proton acceptor is the histidine 122. Zn(2+) contacts are provided by cysteine 130, cysteine 133, cysteine 149, and cysteine 152. Residues 189–191 (GTS), 215–217 (NPE), and alanine 233 each bind NAD(+).

Belongs to the sirtuin family. Class III subfamily. Requires Zn(2+) as cofactor.

Its subcellular location is the cytoplasm. It carries out the reaction N(6)-acetyl-L-lysyl-[protein] + NAD(+) + H2O = 2''-O-acetyl-ADP-D-ribose + nicotinamide + L-lysyl-[protein]. It catalyses the reaction N(6)-succinyl-L-lysyl-[protein] + NAD(+) + H2O = 2''-O-succinyl-ADP-D-ribose + nicotinamide + L-lysyl-[protein]. Its function is as follows. NAD-dependent lysine deacetylase and desuccinylase that specifically removes acetyl and succinyl groups on target proteins. Modulates the activities of several proteins which are inactive in their acylated form. The polypeptide is NAD-dependent protein deacylase (Thermus thermophilus (strain ATCC 27634 / DSM 579 / HB8)).